A 270-amino-acid chain; its full sequence is MANNSVMMKKKLEGKVAIVTGGASGIGEATARLFVKYGARAVVIADIQSELGRSVAESIGKERCSFVQCDVADEEQVKSMIEWTATTYGGLDVMFSNAGVLNSAAQTVKDLDLPLFDKVMRVNTRGAAVCVKQAARKMVELGRGGSIICNAGSSAVRGAHGVTDYVMSKHAVIGLVRSASMQLGAHSIRVNSVSPMAVATPLTRNQGISTPDDVQKFLMPFISLKGVPPTAEQVAEAAAFLGSDEAAFVTGHDLPVDGGVLCMPFLLGSA.

NAD(+)-binding positions include 21–27, 46–48, 70–71, N97, 165–169, and 198–202; these read GGASGIG, DIQ, DV, YVMSK, and VATPL.

The protein belongs to the short-chain dehydrogenases/reductases (SDR) family. In terms of assembly, forms homotetramers.

The catalysed reaction is (S)-8-oxocitronellyl enol = cis-cis-nepetalactol. In terms of biological role, functions as a non-oxidoreductive cyclase to promote the formation of cis-cis-nepetalactol. Cis-cis-nepetalactol is then oxidized by NEPS1 into cis-cis-nepetalactone, which belongs to a family of metabolites that are both insect-repellent and have euphoric effect in cats. Binds NAD(+) as classical short-chain dehydrogenase/reductase (SDR), but does not utilize it for its redox-neutral cyclase activity. The sequence is that of (+)-cis,cis-nepetalactol synthase NEPS3 from Nepeta racemosa (Catmint).